The following is a 149-amino-acid chain: Large ribosomal subunit protein eL19 (149 aa).

Residues 46–99 form a disordered region; it reads EDGTIEAKTAKGNSRGRARKRQQKRAYGHKKGHGSRKGRSGGRQNEKEDWQSRI. The segment covering 59 to 85 has biased composition (basic residues); that stretch reads SRGRARKRQQKRAYGHKKGHGSRKGRS. Over residues 89–99 the composition is skewed to basic and acidic residues; the sequence is QNEKEDWQSRI.

It belongs to the eukaryotic ribosomal protein eL19 family. Part of the 50S ribosomal subunit.

Its function is as follows. Binds to the 23S rRNA. The protein is Large ribosomal subunit protein eL19 of Natronomonas pharaonis (strain ATCC 35678 / DSM 2160 / CIP 103997 / JCM 8858 / NBRC 14720 / NCIMB 2260 / Gabara) (Halobacterium pharaonis).